Here is an 821-residue protein sequence, read N- to C-terminus: Phenylalanine--tRNA ligase beta subunit (821 aa).

One can recognise a tRNA-binding domain in the interval 39–149 (SENVKGIVLG…EDIALNHNLG (111 aa)). In terms of domain architecture, B5 spans 414 to 507 (LKKILIPLRR…RLIGYDMFDL (94 aa)). Mg(2+) contacts are provided by D485, D491, E494, and E495. In terms of domain architecture, FDX-ACB spans 727 to 820 (PTVPKMERDI…IEKKFSTKLR (94 aa)).

This sequence belongs to the phenylalanyl-tRNA synthetase beta subunit family. Type 1 subfamily. In terms of assembly, tetramer of two alpha and two beta subunits. The cofactor is Mg(2+).

Its subcellular location is the cytoplasm. It carries out the reaction tRNA(Phe) + L-phenylalanine + ATP = L-phenylalanyl-tRNA(Phe) + AMP + diphosphate + H(+). This chain is Phenylalanine--tRNA ligase beta subunit, found in Prochlorococcus marinus subsp. pastoris (strain CCMP1986 / NIES-2087 / MED4).